We begin with the raw amino-acid sequence, 151 residues long: Putative transcriptional regulatory protein TK2151 (151 aa).

It belongs to the Tfx family.

In terms of biological role, putative transcriptional regulator. The protein is Putative transcriptional regulatory protein TK2151 of Thermococcus kodakarensis (strain ATCC BAA-918 / JCM 12380 / KOD1) (Pyrococcus kodakaraensis (strain KOD1)).